A 133-amino-acid polypeptide reads, in one-letter code: MLSDPIADMLTRIRNATRAYKESVDIPASKFKEELAKLLVREGYVAGVERLRPEGQKFDVLRITLKYGQKREQVIKHIERVSRPGRRAYVSAENLPRVQRGLGLAVVSTSKGLLPDREARKQGVGGEVVCILW.

This sequence belongs to the universal ribosomal protein uS8 family. As to quaternary structure, part of the 30S ribosomal subunit. Contacts proteins S5 and S12.

One of the primary rRNA binding proteins, it binds directly to 16S rRNA central domain where it helps coordinate assembly of the platform of the 30S subunit. The chain is Small ribosomal subunit protein uS8 from Deinococcus geothermalis (strain DSM 11300 / CIP 105573 / AG-3a).